Reading from the N-terminus, the 269-residue chain is MPELPEVETSRRGIEPHLVGATILHAVVRNGRLRWPVSEEIYRLSDQPVLSVQRRAKYLLLELPEGWIIIHLGMSGSLRILPEELPPEKHDHVDLVMSNGKVLRYTDPRRFGAWLWTKELEGHNVLAHLGPEPLSDDFNGEYLHQKCEKKKTAIKPWLMDNKLVVGVGNIYASESLFAAGIHPDRLASSLSLAECELLARVIKAVLLRSIEQGGTTLKDFLQSDGKPGYFAQELQVYGRKGEPCRVCGTPIVATKHAQRATFYCRQCQK.

The Schiff-base intermediate with DNA role is filled by Pro2. Glu3 (proton donor) is an active-site residue. Lys57 (proton donor; for beta-elimination activity) is an active-site residue. DNA contacts are provided by His90, Arg109, and Lys150. The FPG-type zinc finger occupies 235–269 (QVYGRKGEPCRVCGTPIVATKHAQRATFYCRQCQK). Arg259 serves as the catalytic Proton donor; for delta-elimination activity.

The protein belongs to the FPG family. As to quaternary structure, monomer. Zn(2+) serves as cofactor.

The catalysed reaction is Hydrolysis of DNA containing ring-opened 7-methylguanine residues, releasing 2,6-diamino-4-hydroxy-5-(N-methyl)formamidopyrimidine.. It carries out the reaction 2'-deoxyribonucleotide-(2'-deoxyribose 5'-phosphate)-2'-deoxyribonucleotide-DNA = a 3'-end 2'-deoxyribonucleotide-(2,3-dehydro-2,3-deoxyribose 5'-phosphate)-DNA + a 5'-end 5'-phospho-2'-deoxyribonucleoside-DNA + H(+). In terms of biological role, involved in base excision repair of DNA damaged by oxidation or by mutagenic agents. Acts as a DNA glycosylase that recognizes and removes damaged bases. Has a preference for oxidized purines, such as 7,8-dihydro-8-oxoguanine (8-oxoG). Has AP (apurinic/apyrimidinic) lyase activity and introduces nicks in the DNA strand. Cleaves the DNA backbone by beta-delta elimination to generate a single-strand break at the site of the removed base with both 3'- and 5'-phosphates. This chain is Formamidopyrimidine-DNA glycosylase, found in Escherichia coli O6:H1 (strain CFT073 / ATCC 700928 / UPEC).